The sequence spans 445 residues: StAR-related lipid transfer protein 3 (445 aa).

Residues 1 to 51 (MSKLPRELTRDLERSLPAVASLGSSLSHSQSLSSHLLPPPEKRRAISDVRR) lie on the Cytoplasmic side of the membrane. Positions 46-217 (ISDVRRTFCL…YSPPESFAGS (172 aa)) constitute an MENTAL domain. The helical transmembrane segment at 52 to 72 (TFCLFVTFDLLFISLLWIIEL) threads the bilayer. Over 73–94 (NTNTGIRKNLEQEIIQYNFKTS) the chain is Extracellular. The helical transmembrane segment at 95–115 (FFDIFVLAFFRFSGLLLGYAV) threads the bilayer. The Cytoplasmic segment spans residues 116–120 (LRLRH). Residues 121-141 (WWVIAVTTLVSSAFLIVKVIL) traverse the membrane as a helical segment. Topologically, residues 142 to 148 (SELLSKG) are extracellular. A helical membrane pass occupies residues 149–169 (AFGYLLPIVSFVLAWLETWFL). Over 170–445 (DFKVLPQEAE…QRISELGARA (276 aa)) the chain is Cytoplasmic. Positions 206–212 (QFYSPPE) match the FFAT motif. A Phosphoserine modification is found at serine 209. Residues 230–443 (SFSAQEREYI…LRQRISELGA (214 aa)) form the START domain.

It belongs to the STARD3 family. In terms of assembly, homodimer. Interacts (via the MENTAL domain) with STARD3NL. Interacts (via phosphorylated FFAT motif) with VAPA (via MSP domain). Interacts (via phosphorylated FFAT motif) with VAPB (via MSP domain). Interacts (via phosphorylated FFAT motif) with MOSPD2 (via MSP domain); this interaction allows enrichment of MOSPD2 around endosomes. Post-translationally, phosphorylation at Ser-209 is necessary and sufficient for the direct interaction of the phosphorylated FFAT motif with the MSP domain of MOSPD2, VAPA and VAPB and allows the tethering of two membranes that participates in the formation of ER-endosome contacts. Phosphorylation of the FFAT motif leads to conformation changes. Additional phosphorylations around the core FFAT motif (QFYSPPE) are not essential but strengthen the interaction with MOSPD2, VAPA and VAPB. Phosphorylation at Ser-209 of FFAT motif drives membrane tethering between the endoplasmic reticulum and late endosomes via interaction with VAPA and VAPB that in turn allows the efficient transport of sterol mediated by the START domain. As to expression, expressed in retina.

Its subcellular location is the late endosome membrane. It carries out the reaction cholesterol(in) = cholesterol(out). Functionally, sterol-binding protein that mediates cholesterol transport from the endoplasmic reticulum to endosomes. The sterol transport mechanism is triggered by phosphorylation of FFAT motif that leads to membrane tethering between the endoplasmic reticulum and late endosomes via interaction with VAPA and VAPB. Acts as a lipid transfer protein that redirects sterol to the endosome at the expense of the cell membrane and favors membrane formation inside endosomes. May also mediate cholesterol transport between other membranes, such as mitochondria membrane or cell membrane. However, such results need additional experimental evidences; probably mainly mediates cholesterol transport from the endoplasmic reticulum to endosomes. Does not activate transcriptional cholesterol sensing. Able to bind other lipids, such as lutein, a xanthophyll carotenoids that form the macular pigment of the retina. The chain is StAR-related lipid transfer protein 3 from Homo sapiens (Human).